The chain runs to 150 residues: Macrodomain Ter protein (150 aa).

This sequence belongs to the MatP family. In terms of assembly, homodimer.

The protein localises to the cytoplasm. Required for spatial organization of the terminus region of the chromosome (Ter macrodomain) during the cell cycle. Prevents early segregation of duplicated Ter macrodomains during cell division. Binds specifically to matS, which is a 13 bp signature motif repeated within the Ter macrodomain. The sequence is that of Macrodomain Ter protein from Shigella boydii serotype 18 (strain CDC 3083-94 / BS512).